A 362-amino-acid polypeptide reads, in one-letter code: Cobalt-precorrin-5B C(1)-methyltransferase (362 aa).

This sequence belongs to the CbiD family.

The catalysed reaction is Co-precorrin-5B + S-adenosyl-L-methionine = Co-precorrin-6A + S-adenosyl-L-homocysteine. It participates in cofactor biosynthesis; adenosylcobalamin biosynthesis; cob(II)yrinate a,c-diamide from sirohydrochlorin (anaerobic route): step 6/10. Functionally, catalyzes the methylation of C-1 in cobalt-precorrin-5B to form cobalt-precorrin-6A. The chain is Cobalt-precorrin-5B C(1)-methyltransferase from Burkholderia thailandensis (strain ATCC 700388 / DSM 13276 / CCUG 48851 / CIP 106301 / E264).